Here is a 330-residue protein sequence, read N- to C-terminus: Transcription factor TGA2 (330 aa).

The interval 1–48 (MADTSPRTDVSTDDDTDHPDLGSEGALVNTAASDSSDRSKGKMDQKTL) is disordered. Over residues 35–47 (SSDRSKGKMDQKT) the composition is skewed to basic and acidic residues. A bZIP domain is found at 44 to 107 (DQKTLRRLAQ…GTGDQAHSTG (64 aa)). 2 coiled-coil regions span residues 45-142 (QKTL…HAGD) and 217-244 (INNL…SLAD). Positions 46-66 (KTLRRLAQNREAARKSRLRKK) are basic motif. The interval 72-86 (LENSRLKLTQLEQEL) is leucine-zipper. A DOG1 domain is found at 111 to 327 (ALAFDAEHSR…RALSSLWLAR (217 aa)).

This sequence belongs to the bZIP family. Binds DNA as a dimer. Interacts with NPR1, NPR3 and NPR4. Interacts with GRXC7/ROXY1 and GRXC9/GRX480. In terms of tissue distribution, expressed in the whole plant.

It localises to the nucleus. Its function is as follows. Transcriptional activator that binds specifically to the DNA sequence 5'-TGACG-3'. Recognizes ocs elements like the as-1 motif of the cauliflower mosaic virus 35S promoter. Binding to the as-1-like cis elements mediate auxin- and salicylic acid-inducible transcription. Required to induce the systemic acquired resistance (SAR) via the regulation of pathogenesis-related genes expression. Binding to the as-1 element of PR-1 promoter is salicylic acid-inducible and mediated by NPR1. Could also bind to the C-boxes (5'-ATGACGTCAT-3') with high affinity. The protein is Transcription factor TGA2 (TGA2) of Arabidopsis thaliana (Mouse-ear cress).